A 338-amino-acid polypeptide reads, in one-letter code: P2Y purinoceptor 14 (338 aa).

The Extracellular portion of the chain corresponds to 1 to 29; the sequence is MINSTSTQPPDESCSQNLLITQQIIPVLY. Asn3 carries N-linked (GlcNAc...) asparagine glycosylation. The chain crosses the membrane as a helical span at residues 30–50; that stretch reads CMVFIAGILLNGVSGWIFFYV. Residues 51–55 are Cytoplasmic-facing; the sequence is PSSKS. The chain crosses the membrane as a helical span at residues 56 to 76; that stretch reads FIIYLKNIVIADFVMSLTFPF. Residues 77-96 lie on the Extracellular side of the membrane; that stretch reads KILGDSGLGPWQLNVFVCRV. The cysteines at positions 94 and 172 are disulfide-linked. The helical transmembrane segment at 97 to 117 threads the bilayer; it reads SAVLFYVNMYVSIVFFGLISF. Over 118–139 the chain is Cytoplasmic; that stretch reads DRYYKIVKPLWTSFIQSVSYSK. A helical transmembrane segment spans residues 140–160; that stretch reads LLSVIVWMLMLLLAVPNIILT. N-linked (GlcNAc...) asparagine glycosylation is present at Asn161. The Extracellular portion of the chain corresponds to 161–188; it reads NQSVREVTQIKCIELKSELGRKWHKASN. Residues 189–209 traverse the membrane as a helical segment; it reads YIFVAIFWIVFLLLIVFYTAI. Residues 210–234 are Cytoplasmic-facing; the sequence is TKKIFKSHLKSSRNSTSVKKKSSRN. A helical membrane pass occupies residues 235 to 255; it reads IFSIVFVFFVCFVPYHIARIP. The Extracellular portion of the chain corresponds to 256-278; the sequence is YTKSQTEAHYSCQSKEILRYMKE. A helical transmembrane segment spans residues 279 to 299; sequence FTLLLSAANVCLDPIIYFFLC. Topologically, residues 300-338 are cytoplasmic; that stretch reads QPFREILCKKLHIPLKAQNDLDISRIKRGNTTLESTDTL.

Belongs to the G-protein coupled receptor 1 family. In terms of tissue distribution, highest expression in the placenta, adipose tissue, stomach and intestine, intermediate levels in the brain, spleen, lung and heart, lowest levels in the kidney.

The protein resides in the cell membrane. Receptor for UDP-glucose and other UDP-sugar coupled to G-proteins. Not activated by ATP, ADP, UTP or ATP. The chain is P2Y purinoceptor 14 (P2RY14) from Homo sapiens (Human).